The following is a 118-amino-acid chain: Ribosome-binding factor A (118 aa).

The protein belongs to the RbfA family. As to quaternary structure, monomer. Binds 30S ribosomal subunits, but not 50S ribosomal subunits or 70S ribosomes.

The protein resides in the cytoplasm. Its function is as follows. One of several proteins that assist in the late maturation steps of the functional core of the 30S ribosomal subunit. Associates with free 30S ribosomal subunits (but not with 30S subunits that are part of 70S ribosomes or polysomes). Required for efficient processing of 16S rRNA. May interact with the 5'-terminal helix region of 16S rRNA. This chain is Ribosome-binding factor A, found in Thermodesulfovibrio yellowstonii (strain ATCC 51303 / DSM 11347 / YP87).